Consider the following 465-residue polypeptide: Probable spore coat protein DDB_G0283555 (465 aa).

The first 22 residues, 1–22 (MRINNLLVCLVLVFSTLSISNA), serve as a signal peptide directing secretion. The region spanning 35–153 (RNCDSLSEDQ…RYPVCKGGGG (119 aa)) is the DSCP-N domain. 7 Follistatin-like domains span residues 160–182 (PCKN…AYCV), 195–217 (LCKA…ACCV), 229–251 (LCDA…ANCV), 257–280 (ECEH…PHCQ), 287–309 (LCRN…PTCI), 318–340 (PCRD…PSCV), and 435–458 (LCEF…PVCL).

Functionally, may contribute to the structure of the coat at the interface between the middle, cellulosic layer and the outer, electron-dense, proteinaceous layer. The sequence is that of Probable spore coat protein DDB_G0283555 from Dictyostelium discoideum (Social amoeba).